The sequence spans 280 residues: MELLDIWNWIQQNGILTAVITGIVALLFNQRQKSIERFYSQSGETLEKILEPMYYSLKEIKNEEDENHKMVLIEKFFEEYSGKKGKLSKLRNILLIDQILNTEDCFREYILNKNSENRKKLFYKMRMLDQAVNKEYRSIFVTLNKNYNWYKVLFRTNYILSAVFVFVRWFKETLAFFVGASAFAFIPLLYDKYLGEQVLGNWLEVNKLIFGLSCSALYIFWIIHYFLLKDTMQRKDEISLFQEWFDKTKLGKWTNKNVWGKIGNWNVERRARRVRNDEDV.

Helical transmembrane passes span 10–29 (IQQN…LLFN), 164–186 (FVFV…FAFI), and 209–228 (IFGL…YFLL).

The protein localises to the cell membrane. This is an uncharacterized protein from Bacillus subtilis (strain 168).